Consider the following 142-residue polypeptide: Aspartate 1-decarboxylase (142 aa).

The active-site Schiff-base intermediate with substrate; via pyruvic acid is the serine 25. Position 25 is a pyruvic acid (Ser) (serine 25). Threonine 57 provides a ligand contact to substrate. Tyrosine 58 acts as the Proton donor in catalysis. Residue 73-75 (GAA) coordinates substrate.

Belongs to the PanD family. Heterooctamer of four alpha and four beta subunits. Pyruvate serves as cofactor. Post-translationally, is synthesized initially as an inactive proenzyme, which is activated by self-cleavage at a specific serine bond to produce a beta-subunit with a hydroxyl group at its C-terminus and an alpha-subunit with a pyruvoyl group at its N-terminus.

Its subcellular location is the cytoplasm. It carries out the reaction L-aspartate + H(+) = beta-alanine + CO2. It functions in the pathway cofactor biosynthesis; (R)-pantothenate biosynthesis; beta-alanine from L-aspartate: step 1/1. Its function is as follows. Catalyzes the pyruvoyl-dependent decarboxylation of aspartate to produce beta-alanine. This is Aspartate 1-decarboxylase from Mycobacterium leprae (strain Br4923).